The sequence spans 96 residues: Myticin-A (96 aa).

Residues 1-20 form the signal peptide; the sequence is MKATILLAVLVAVFVAGTEA. The propeptide at 61–96 is removed in mature form; that stretch reads VNNPFRVNQVAKSINDLDYTPIMKSMENLDNGMDML.

Contains four disulfide bonds. As to expression, hemocytes.

It localises to the secreted. In terms of biological role, bacteriolytic activity against Gram-positive bacteria M.luteus, B.megaterium and A.viridans. This is Myticin-A from Mytilus galloprovincialis (Mediterranean mussel).